A 209-amino-acid polypeptide reads, in one-letter code: Claudin-4 (209 aa).

At 1–9 the chain is on the cytoplasmic side; the sequence is MASMGLQVT. The segment at 1–103 is interaction with EPHA2; that stretch reads MASMGLQVTG…GVLLSVVGGK (103 aa). A helical transmembrane segment spans residues 10–30; it reads GIALAVLGWLAVMLCCALPMW. Topologically, residues 31 to 81 are extracellular; the sequence is RVTAFIGSNIVTSQTIWEGLWMNCVVQSTGQMQCKVYDSLLALPQDLQAAR. Residues Cys54 and Cys64 are joined by a disulfide bond. The helical transmembrane segment at 82-102 threads the bilayer; sequence ALVIISIIVAALGVLLSVVGG. Residues 103–117 lie on the Cytoplasmic side of the membrane; the sequence is KCTNCLEDESAKAKT. The chain crosses the membrane as a helical span at residues 118–138; sequence MIVAGVVFLLAGLLVIVPVSW. The Extracellular segment spans residues 139 to 160; it reads TAHNIIQDFYNPLVASGQKREM. Residues 161–181 traverse the membrane as a helical segment; it reads GASLYVGWAASGLLLLGGGLL. At 182 to 209 the chain is on the cytoplasmic side; that stretch reads CCNCPPRTDKPYSAKYSAARSAAASNYV. Phosphotyrosine; by EPHA2 is present on Tyr208. The interval 208-209 is interactions with TJP1, TJP2 and TJP3; it reads YV.

It belongs to the claudin family. In terms of assembly, interacts with EPHA2; phosphorylates CLDN4 and may regulate tight junctions. Directly interacts with TJP1/ZO-1, TJP2/ZO-2 and TJP3/ZO-3. Interacts with CLDN1. Interacts with CLDN8. In terms of processing, phosphorylated. Phosphorylation by EPHA2 is stimulated by EFNA1 and alters interaction with TJP1.

Its subcellular location is the cell junction. It localises to the tight junction. It is found in the cell membrane. In terms of biological role, channel-forming tight junction protein that mediates paracellular chloride transport in the kidney. Plays a critical role in the paracellular reabsorption of filtered chloride in the kidney collecting ducts. Claudins play a major role in tight junction-specific obliteration of the intercellular space, through calcium-independent cell-adhesion activity. The polypeptide is Claudin-4 (CLDN4) (Chlorocebus aethiops (Green monkey)).